The sequence spans 271 residues: Structure-specific endonuclease subunit slx1 (271 aa).

In terms of domain architecture, GIY-YIG spans 5–87; the sequence is NFYCCYLLKS…QNLGISRYTK (83 aa). The SLX1-type zinc finger occupies 180-231; sequence CNLCYECIESDELRANCPFTDCNSINHLTCLASSFLTEECQVLPIEGMCTKC.

The protein belongs to the SLX1 family. Forms a heterodimer with slx4. Requires Mg(2+) as cofactor. It depends on Mn(2+) as a cofactor.

It localises to the nucleus. It is found in the nucleolus. In terms of biological role, catalytic subunit of the slx1-slx4 structure-specific endonuclease that resolves DNA secondary structures generated during DNA repair and recombination. Has endonuclease activity towards branched DNA substrates, introducing single-strand cuts in duplex DNA close to junctions with ss-DNA. Has a preference for stem-loop (SL) and splayed arm Y structures. Introduces a single-strand cut in duplex DNA on the 3' side of a double-strand/single-strand junction with respect to the single-strand moving 3' to 5' away from the junction. Plays a critical role in maintaining the integrity of the ribosomal DNA (rDNA) loci, where it has a role in re-starting stalled replication forks. The complex initiates homologous recombination (HR) events, used to maintain rDNA copy number, in the rDNA repeats that are processed by a mechanism that requires rad22, but not rhp51. It is also required for suppression of methyl methanesulfonate (MMS) and UV-C irradiation hypersensitivity of the structural maintenance of chromosome (SMC) protein mutant, smc6-74, by overexpression of brc1. Has Holliday junction resolvase activity in vitro. In Schizosaccharomyces pombe (strain 972 / ATCC 24843) (Fission yeast), this protein is Structure-specific endonuclease subunit slx1.